Reading from the N-terminus, the 196-residue chain is Ribonuclease HII (196 aa).

The 188-residue stretch at 9-196 (NLIAGVDEVG…APVKRALNLV (188 aa)) folds into the RNase H type-2 domain. A divalent metal cation-binding residues include aspartate 15, glutamate 16, and aspartate 107.

It belongs to the RNase HII family. Mn(2+) is required as a cofactor. Requires Mg(2+) as cofactor.

Its subcellular location is the cytoplasm. The enzyme catalyses Endonucleolytic cleavage to 5'-phosphomonoester.. Functionally, endonuclease that specifically degrades the RNA of RNA-DNA hybrids. This Proteus mirabilis (strain HI4320) protein is Ribonuclease HII.